Reading from the N-terminus, the 1056-residue chain is Carbamoyl phosphate synthase large chain (1056 aa).

A carboxyphosphate synthetic domain region spans residues 1-397 (MPKKSHIKKV…AFKKALRSLD (397 aa)). The ATP site is built by Arg127, Arg167, Gly173, Gly174, Glu206, Val208, Glu213, Gly239, Ile240, His241, Gln282, and Glu294. The region spanning 131 to 323 (RDLMNAIGEP…IARVAAKIAI (193 aa)) is the ATP-grasp 1 domain. Mg(2+) contacts are provided by Gln282, Glu294, and Asn296. Mn(2+)-binding residues include Gln282, Glu294, and Asn296. Residues 398–530 (NDMQQHTNPS…YSTWEEGCEL (133 aa)) are oligomerization domain. The segment at 531–920 (VRDSAKKVLI…YKACTAADNT (390 aa)) is carbamoyl phosphate synthetic domain. Positions 662-853 (SRLLTRLEIP…LAKIAAKVMV (192 aa)) constitute an ATP-grasp 2 domain. ATP is bound by residues Arg698, Ser737, Leu739, Glu744, Gly769, Val770, His771, Ser772, Gln812, and Glu824. 3 residues coordinate Mg(2+): Gln812, Glu824, and Asn826. Gln812, Glu824, and Asn826 together coordinate Mn(2+). Residues 919-1056 (NTLPTTGNVF…EPLGHYHGLM (138 aa)) enclose the MGS-like domain. Residues 921–1056 (LPTTGNVFIS…EPLGHYHGLM (136 aa)) form an allosteric domain region.

The protein belongs to the CarB family. As to quaternary structure, composed of two chains; the small (or glutamine) chain promotes the hydrolysis of glutamine to ammonia, which is used by the large (or ammonia) chain to synthesize carbamoyl phosphate. Tetramer of heterodimers (alpha,beta)4. Requires Mg(2+) as cofactor. Mn(2+) serves as cofactor.

It carries out the reaction hydrogencarbonate + L-glutamine + 2 ATP + H2O = carbamoyl phosphate + L-glutamate + 2 ADP + phosphate + 2 H(+). It catalyses the reaction hydrogencarbonate + NH4(+) + 2 ATP = carbamoyl phosphate + 2 ADP + phosphate + 2 H(+). It functions in the pathway amino-acid biosynthesis; L-arginine biosynthesis; carbamoyl phosphate from bicarbonate: step 1/1. It participates in pyrimidine metabolism; UMP biosynthesis via de novo pathway; (S)-dihydroorotate from bicarbonate: step 1/3. Large subunit of the glutamine-dependent carbamoyl phosphate synthetase (CPSase). CPSase catalyzes the formation of carbamoyl phosphate from the ammonia moiety of glutamine, carbonate, and phosphate donated by ATP, constituting the first step of 2 biosynthetic pathways, one leading to arginine and/or urea and the other to pyrimidine nucleotides. The large subunit (synthetase) binds the substrates ammonia (free or transferred from glutamine from the small subunit), hydrogencarbonate and ATP and carries out an ATP-coupled ligase reaction, activating hydrogencarbonate by forming carboxy phosphate which reacts with ammonia to form carbamoyl phosphate. In Methanoculleus marisnigri (strain ATCC 35101 / DSM 1498 / JR1), this protein is Carbamoyl phosphate synthase large chain.